The following is an 88-amino-acid chain: Large ribosomal subunit protein bL27 (88 aa).

A disordered region spans residues 1–24 (MAHKKAGGSSRNGRDSEGRRLGVK).

Belongs to the bacterial ribosomal protein bL27 family.

This is Large ribosomal subunit protein bL27 from Methylobacterium radiotolerans (strain ATCC 27329 / DSM 1819 / JCM 2831 / NBRC 15690 / NCIMB 10815 / 0-1).